Reading from the N-terminus, the 325-residue chain is Beta-ketoacyl-[acyl-carrier-protein] synthase III (325 aa).

Residues cysteine 112 and histidine 250 contribute to the active site. The interval 251-255 (QANSR) is ACP-binding. The active site involves asparagine 280.

This sequence belongs to the thiolase-like superfamily. FabH family. Homodimer.

The protein resides in the cytoplasm. The enzyme catalyses malonyl-[ACP] + acetyl-CoA + H(+) = 3-oxobutanoyl-[ACP] + CO2 + CoA. It functions in the pathway lipid metabolism; fatty acid biosynthesis. Functionally, catalyzes the condensation reaction of fatty acid synthesis by the addition to an acyl acceptor of two carbons from malonyl-ACP. Catalyzes the first condensation reaction which initiates fatty acid synthesis and may therefore play a role in governing the total rate of fatty acid production. Possesses both acetoacetyl-ACP synthase and acetyl transacylase activities. Its substrate specificity determines the biosynthesis of branched-chain and/or straight-chain of fatty acids. The protein is Beta-ketoacyl-[acyl-carrier-protein] synthase III of Lactococcus lactis subsp. cremoris (strain MG1363).